The primary structure comprises 396 residues: Cathepsin D (396 aa).

The first 18 residues, 1 to 18 (MKMLLLCVFSALALTNDA), serve as a signal peptide directing secretion. The propeptide at 19–61 (LVRIPLKKFRSIRRQLTDSGKRAEELLADHHSLKYNLSFPASN) is activation peptide. The region spanning 76-393 (YYGEIGLGTP…DRDANRVGFA (318 aa)) is the Peptidase A1 domain. D94 is a catalytic residue. The cysteines at positions 107 and 114 are disulfide-linked. N131 and N249 each carry an N-linked (GlcNAc...) asparagine glycan. Cysteines 272 and 276 form a disulfide. Residue D281 is part of the active site. The cysteines at positions 315 and 352 are disulfide-linked.

This sequence belongs to the peptidase A1 family. Monomer.

It localises to the lysosome. The catalysed reaction is Specificity similar to, but narrower than, that of pepsin A. Does not cleave the 4-Gln-|-His-5 bond in B chain of insulin.. With respect to regulation, inhibited by pepstatin. Acid protease active in intracellular protein breakdown. The chain is Cathepsin D (ctsd) from Chionodraco hamatus (Antarctic teleost icefish).